Consider the following 261-residue polypeptide: Imidazole glycerol phosphate synthase subunit HisF (261 aa).

Catalysis depends on residues D16 and D135.

The protein belongs to the HisA/HisF family. Heterodimer of HisH and HisF.

The protein localises to the cytoplasm. It carries out the reaction 5-[(5-phospho-1-deoxy-D-ribulos-1-ylimino)methylamino]-1-(5-phospho-beta-D-ribosyl)imidazole-4-carboxamide + L-glutamine = D-erythro-1-(imidazol-4-yl)glycerol 3-phosphate + 5-amino-1-(5-phospho-beta-D-ribosyl)imidazole-4-carboxamide + L-glutamate + H(+). It functions in the pathway amino-acid biosynthesis; L-histidine biosynthesis; L-histidine from 5-phospho-alpha-D-ribose 1-diphosphate: step 5/9. IGPS catalyzes the conversion of PRFAR and glutamine to IGP, AICAR and glutamate. The HisF subunit catalyzes the cyclization activity that produces IGP and AICAR from PRFAR using the ammonia provided by the HisH subunit. This Mycobacterium leprae (strain Br4923) protein is Imidazole glycerol phosphate synthase subunit HisF.